We begin with the raw amino-acid sequence, 73 residues long: uncharacterized protein (73 aa).

This is an uncharacterized protein from Saccharolobus islandicus (Sulfolobus islandicus).